The primary structure comprises 397 residues: Phosphoglycerate kinase (397 aa).

Substrate contacts are provided by residues 21-23 (DFN), Arg-37, 60-63 (HLGR), Arg-120, and Arg-153. Residues Lys-206, Gly-296, Glu-327, and 353–356 (GGDS) each bind ATP.

This sequence belongs to the phosphoglycerate kinase family. In terms of assembly, monomer.

The protein resides in the cytoplasm. It catalyses the reaction (2R)-3-phosphoglycerate + ATP = (2R)-3-phospho-glyceroyl phosphate + ADP. The protein operates within carbohydrate degradation; glycolysis; pyruvate from D-glyceraldehyde 3-phosphate: step 2/5. The chain is Phosphoglycerate kinase from Rhodopirellula baltica (strain DSM 10527 / NCIMB 13988 / SH1).